The chain runs to 1353 residues: Stress response protein NST1 (1353 aa).

The span at 1 to 12 (MSSKSQQPPTGL) shows a compositional bias: polar residues. 9 disordered regions span residues 1–66 (MSSK…FFNF), 216–422 (NANA…TQSS), 503–522 (NGLR…VEVD), 531–618 (DHRA…SFGS), 652–694 (RRSV…AEEG), 727–882 (LREL…AKET), 979–1119 (GLKS…DDAF), 1140–1276 (GSLI…GAGV), and 1308–1337 (GGTA…HQQQ). Over residues 16-25 (AAKKRAKKAA) the composition is skewed to basic residues. Residues 26–45 (KQSQNPQPQSAPQTSSQTPA) are compositionally biased toward low complexity. Over residues 46–59 (SVPPLPPASVPDPL) the composition is skewed to pro residues. Over residues 218 to 229 (NARSFPSPQQTI) the composition is skewed to polar residues. Residues 242–254 (REEEYDDEEEIEE) are compositionally biased toward acidic residues. Residues 268–277 (KKNKKKKKKG) show a composition bias toward basic residues. The segment covering 287-300 (VEPPAPLPPLPPPS) has biased composition (pro residues). Residues 317 to 330 (LPTHQPQPLSQQPP) are compositionally biased toward low complexity. A compositionally biased stretch (pro residues) spans 331-349 (SLNPLPPPAPASAPTPTPP). Over residues 368 to 388 (PARSARAAGKAPASAAPPHNA) the composition is skewed to low complexity. A compositionally biased stretch (basic and acidic residues) spans 531 to 541 (DHRAPELHDHD). Over residues 542–583 (PDDLDGEESEEYDDDDDYADDDELDDDDIGTDEADVGDEIDE) the composition is skewed to acidic residues. The segment covering 654–665 (SVREEQNLRDMQ) has biased composition (basic and acidic residues). The segment covering 666 to 681 (EETDEEEEEEDDDESR) has biased composition (acidic residues). Composition is skewed to basic and acidic residues over residues 682-694 (DEPM…AEEG), 727-750 (LREL…EAQK), and 760-882 (QKAE…AKET). Residues 713 to 944 (AYRERVAKQR…AAQQAQRERA (232 aa)) are a coiled coil. Residues 1009–1021 (TNATPGRSMQKTP) are compositionally biased toward polar residues. Residues 1154 to 1165 (PTPPAPIAPPNL) are compositionally biased toward pro residues. 2 stretches are compositionally biased toward polar residues: residues 1174 to 1187 (SDGQ…LRST) and 1209 to 1220 (QPQQRRPTTSWD).

The protein belongs to the NST1 family.

It is found in the cytoplasm. In terms of biological role, may act as a negative regulator of salt tolerance. The protein is Stress response protein NST1 (NST1) of Cryptococcus neoformans var. neoformans serotype D (strain B-3501A) (Filobasidiella neoformans).